The primary structure comprises 179 residues: Isopentenyl-diphosphate Delta-isomerase (179 aa).

2 residues coordinate Mn(2+): His-24 and His-30. Positions 28–160 constitute a Nudix hydrolase domain; that stretch reads LLHRAFSIFI…PEKFTVWFLT (133 aa). Cys-65 is an active-site residue. Mn(2+) is bound at residue His-67. Glu-85 serves as a coordination point for Mg(2+). Glu-110 and Glu-112 together coordinate Mn(2+). Residue Glu-112 is part of the active site.

It belongs to the IPP isomerase type 1 family. As to quaternary structure, homodimer. Mg(2+) is required as a cofactor. Requires Mn(2+) as cofactor.

It localises to the cytoplasm. The catalysed reaction is isopentenyl diphosphate = dimethylallyl diphosphate. It participates in isoprenoid biosynthesis; dimethylallyl diphosphate biosynthesis; dimethylallyl diphosphate from isopentenyl diphosphate: step 1/1. Functionally, catalyzes the 1,3-allylic rearrangement of the homoallylic substrate isopentenyl (IPP) to its highly electrophilic allylic isomer, dimethylallyl diphosphate (DMAPP). This chain is Isopentenyl-diphosphate Delta-isomerase, found in Serratia proteamaculans (strain 568).